We begin with the raw amino-acid sequence, 1074 residues long: Telomerase reverse transcriptase (1074 aa).

Residues 240–265 form a disordered region; it reads DKVSCETMQDGESGKTTLVQKQPGSK. Positions 253–262 are enriched in polar residues; that stretch reads GKTTLVQKQP. Residues 300–305 carry the TFLY; involved in RNA binding motif; sequence TLGFLY. Interaction with RNA template regions lie at residues 355 to 360 and 461 to 486; these read LPRRFF and WKIKVNNCDWLKISKTGRVPPSELSY. The Reverse transcriptase domain occupies 552–877; that stretch reads TPDQVAALPK…CLFPWCGLLL (326 aa). Asp649, Asp810, and Asp811 together coordinate Mg(2+).

It belongs to the reverse transcriptase family. Telomerase subfamily. In terms of assembly, catalytic subunit of the telomerase holoenzyme complex composed minimally of TERT and the telomerase RNA template component (TERC). In terms of tissue distribution, detected at highest levels in gill, ovary and testis, and at lower levels in brain, eye, heart, skin, spleen and stomach.

It is found in the nucleus. The protein resides in the chromosome. The protein localises to the telomere. It carries out the reaction DNA(n) + a 2'-deoxyribonucleoside 5'-triphosphate = DNA(n+1) + diphosphate. Its function is as follows. Telomerase is a ribonucleoprotein enzyme essential for the replication of chromosome termini in most eukaryotes. It elongates telomeres. It is a reverse transcriptase that adds simple sequence repeats to chromosome ends by copying a template sequence within the RNA component of the enzyme. This is Telomerase reverse transcriptase from Takifugu rubripes (Japanese pufferfish).